Here is a 63-residue protein sequence, read N- to C-terminus: Large ribosomal subunit protein bL28 (63 aa).

Belongs to the bacterial ribosomal protein bL28 family.

The polypeptide is Large ribosomal subunit protein bL28 (Clostridium novyi (strain NT)).